The sequence spans 162 residues: Ribosome maturation factor RimP (162 aa).

It belongs to the RimP family.

Its subcellular location is the cytoplasm. Its function is as follows. Required for maturation of 30S ribosomal subunits. The sequence is that of Ribosome maturation factor RimP from Cupriavidus metallidurans (strain ATCC 43123 / DSM 2839 / NBRC 102507 / CH34) (Ralstonia metallidurans).